We begin with the raw amino-acid sequence, 579 residues long: Transcription factor COE2 (579 aa).

An interaction with DNA region spans residues 63-66; the sequence is RKSN. A C5-type zinc finger spans residues 149–168; sequence CRVLLTHEVMCSRCCEKKSC. Interaction with DNA stretches follow at residues 195-202 and 234-237; these read NCLKTAGN and NNSK. Positions 260-343 constitute an IPT/TIG domain; the sequence is PCIKAISPSE…KGAPGRFIYT (84 aa). Disordered regions lie at residues 442 to 482, 514 to 533, and 549 to 579; these read GVSI…YGSN, AIMP…LPFS, and LRPQ…VPPM. The segment covering 449 to 459 has biased composition (polar residues); sequence GQTSGQGYTRN. 2 stretches are compositionally biased toward low complexity: residues 460 to 472 and 521 to 533; these read SSSL…PSSS and PGSS…LPFS.

Belongs to the COE family.

The protein resides in the nucleus. The sequence is that of Transcription factor COE2 (coe2) from Danio rerio (Zebrafish).